A 456-amino-acid chain; its full sequence is UPF0496 protein 4 (456 aa).

A helical membrane pass occupies residues 195 to 217 (VLMRALYGIESVTVFVCSIFVAV). Residues 368–390 (QDSNVKQANGSSDESALVVPERT) are disordered. The segment covering 371–381 (NVKQANGSSDE) has biased composition (polar residues).

This sequence belongs to the ROH1 family.

It localises to the membrane. This Oryza sativa subsp. japonica (Rice) protein is UPF0496 protein 4.